Reading from the N-terminus, the 257-residue chain is Phycoerythrobilin:ferredoxin oxidoreductase (257 aa).

This sequence belongs to the HY2 family.

It catalyses the reaction (3Z)-phycoerythrobilin + oxidized 2[4Fe-4S]-[ferredoxin] = 15,16-dihydrobiliverdin + reduced 2[4Fe-4S]-[ferredoxin] + 2 H(+). In terms of biological role, catalyzes the two-electron reduction of the C2 and C3(1) diene system of 15,16-dihydrobiliverdin. The sequence is that of Phycoerythrobilin:ferredoxin oxidoreductase (pebB) from Synechococcus sp. (strain WH8020).